The sequence spans 439 residues: Capsid vertex component 1 (439 aa).

This sequence belongs to the herpesviridae CVC1 protein family. In terms of assembly, interacts (via C-terminus) with capsid vertex component 2/CVC2.

The protein localises to the virion. It is found in the host nucleus. Functionally, capsid vertex-specific component that plays a role during viral DNA encapsidation, assuring correct genome cleavage and presumably stabilizing capsids that contain full-length viral genomes. The polypeptide is Capsid vertex component 1 (Homo sapiens (Human)).